The chain runs to 147 residues: Large ribosomal subunit protein bL9 (147 aa).

The protein belongs to the bacterial ribosomal protein bL9 family.

Its function is as follows. Binds to the 23S rRNA. The sequence is that of Large ribosomal subunit protein bL9 from Exiguobacterium sp. (strain ATCC BAA-1283 / AT1b).